A 518-amino-acid chain; its full sequence is Dihydro-ML-236C monooxygenase mlcC (518 aa).

Topologically, residues 1-31 are cytoplasmic; sequence MLGQVLLTVESYQWVSTPQALVAVAVLLSLI. A helical; Signal-anchor for type II membrane protein transmembrane segment spans residues 32–48; sequence AYRLRGRQSELQVYNPK. Residues 49-518 are Lumenal-facing; it reads KWWELTTMRA…EDIPLPHDRC (470 aa). Cysteine 454 contributes to the heme binding site.

Belongs to the cytochrome P450 family. Heme is required as a cofactor.

It is found in the endoplasmic reticulum membrane. The enzyme catalyses dihydro-ML-236C carboxylate + reduced [NADPH--hemoprotein reductase] + O2 = ML-236C carboxylate + oxidized [NADPH--hemoprotein reductase] + 2 H2O + H(+). It catalyses the reaction ML-236C carboxylate + reduced [NADPH--hemoprotein reductase] + O2 = ML-236A carboxylate + oxidized [NADPH--hemoprotein reductase] + H2O + H(+). It participates in polyketide biosynthesis. In terms of biological role, dihydro-ML-236C carboxylate monooxygenase; part of the gene cluster that mediates the biosynthesis of compactin, also known as mevastatin or ML-236B, and which acts as a potent competitive inhibitor of HMG-CoA reductase. Compactin biosynthesis is performed in two stages. The first stage is catalyzed by the nonaketide synthase mlcA, which belongs to type I polyketide synthases and catalyzes the iterative nine-step formation of the polyketide. This PKS stage is completed by the action of dehydrogenase mlcG, which catalyzes the NADPH-dependent reduction of the unsaturated tetra-, penta- and heptaketide intermediates that arise during the mlcA-mediated biosynthesis of the nonaketide chain and leads to dihydro-ML-236C carboxylate. Covalently bound dihydro-ML-236C carboxylate is released from mlcA by the mlcF esterase. Conversion of dihydro-ML-236C carboxylate into ML-236A carboxylate is subsequently performed with the participation of molecular oxygen and P450 monoogygenase mlcC. Finally, mlcH performs the conversion of ML-236A carboxylate to ML-236B/compactin carboxylate through the addition of the side-chain diketide moiety produced by the diketide synthase mlcB. This Penicillium citrinum protein is Dihydro-ML-236C monooxygenase mlcC.